A 354-amino-acid polypeptide reads, in one-letter code: Ferrochelatase (354 aa).

The Fe cation site is built by histidine 214 and glutamate 295.

The protein belongs to the ferrochelatase family.

The protein resides in the cytoplasm. The catalysed reaction is heme b + 2 H(+) = protoporphyrin IX + Fe(2+). It functions in the pathway porphyrin-containing compound metabolism; protoheme biosynthesis; protoheme from protoporphyrin-IX: step 1/1. Functionally, catalyzes the ferrous insertion into protoporphyrin IX. This chain is Ferrochelatase, found in Burkholderia orbicola (strain AU 1054).